The chain runs to 138 residues: Transcription antitermination protein NusB (138 aa).

It belongs to the NusB family.

Functionally, involved in transcription antitermination. Required for transcription of ribosomal RNA (rRNA) genes. Binds specifically to the boxA antiterminator sequence of the ribosomal RNA (rrn) operons. The polypeptide is Transcription antitermination protein NusB (Geobacter sulfurreducens (strain ATCC 51573 / DSM 12127 / PCA)).